A 420-amino-acid chain; its full sequence is Serine hydroxymethyltransferase (420 aa).

Residues leucine 123 and 127 to 129 (GHL) each bind (6S)-5,6,7,8-tetrahydrofolate. At lysine 232 the chain carries N6-(pyridoxal phosphate)lysine. A (6S)-5,6,7,8-tetrahydrofolate-binding site is contributed by 357–359 (SPF).

The protein belongs to the SHMT family. In terms of assembly, homodimer. Requires pyridoxal 5'-phosphate as cofactor.

The protein resides in the cytoplasm. The catalysed reaction is (6R)-5,10-methylene-5,6,7,8-tetrahydrofolate + glycine + H2O = (6S)-5,6,7,8-tetrahydrofolate + L-serine. The protein operates within one-carbon metabolism; tetrahydrofolate interconversion. Its pathway is amino-acid biosynthesis; glycine biosynthesis; glycine from L-serine: step 1/1. Functionally, catalyzes the reversible interconversion of serine and glycine with tetrahydrofolate (THF) serving as the one-carbon carrier. This reaction serves as the major source of one-carbon groups required for the biosynthesis of purines, thymidylate, methionine, and other important biomolecules. Also exhibits THF-independent aldolase activity toward beta-hydroxyamino acids, producing glycine and aldehydes, via a retro-aldol mechanism. This Streptococcus pyogenes serotype M2 (strain MGAS10270) protein is Serine hydroxymethyltransferase.